A 156-amino-acid chain; its full sequence is ATP synthase subunit b (156 aa).

A helical transmembrane segment spans residues L7–L29.

Belongs to the ATPase B chain family. As to quaternary structure, F-type ATPases have 2 components, F(1) - the catalytic core - and F(0) - the membrane proton channel. F(1) has five subunits: alpha(3), beta(3), gamma(1), delta(1), epsilon(1). F(0) has three main subunits: a(1), b(2) and c(10-14). The alpha and beta chains form an alternating ring which encloses part of the gamma chain. F(1) is attached to F(0) by a central stalk formed by the gamma and epsilon chains, while a peripheral stalk is formed by the delta and b chains.

Its subcellular location is the cell inner membrane. Its function is as follows. F(1)F(0) ATP synthase produces ATP from ADP in the presence of a proton or sodium gradient. F-type ATPases consist of two structural domains, F(1) containing the extramembraneous catalytic core and F(0) containing the membrane proton channel, linked together by a central stalk and a peripheral stalk. During catalysis, ATP synthesis in the catalytic domain of F(1) is coupled via a rotary mechanism of the central stalk subunits to proton translocation. Functionally, component of the F(0) channel, it forms part of the peripheral stalk, linking F(1) to F(0). This is ATP synthase subunit b from Shewanella denitrificans (strain OS217 / ATCC BAA-1090 / DSM 15013).